The following is a 247-amino-acid chain: 2,3-bisphosphoglycerate-dependent phosphoglycerate mutase (247 aa).

Substrate-binding positions include 8-15 (RHGESTWN), 21-22 (TG), arginine 60, 87-90 (ERHY), lysine 98, 114-115 (RR), and 183-184 (GN). The Tele-phosphohistidine intermediate role is filled by histidine 9. Glutamate 87 acts as the Proton donor/acceptor in catalysis.

Belongs to the phosphoglycerate mutase family. BPG-dependent PGAM subfamily. As to quaternary structure, homodimer.

The enzyme catalyses (2R)-2-phosphoglycerate = (2R)-3-phosphoglycerate. Its pathway is carbohydrate degradation; glycolysis; pyruvate from D-glyceraldehyde 3-phosphate: step 3/5. Catalyzes the interconversion of 2-phosphoglycerate and 3-phosphoglycerate. This chain is 2,3-bisphosphoglycerate-dependent phosphoglycerate mutase, found in Acidovorax ebreus (strain TPSY) (Diaphorobacter sp. (strain TPSY)).